Reading from the N-terminus, the 249-residue chain is Testis-expressed protein 101 (249 aa).

The N-terminal stretch at 1-25 (MGTPRIQHLLILLVLGASLLTSGLE) is a signal peptide. N45 and N159 each carry an N-linked (GlcNAc...) asparagine glycan. Residues 140–211 (CPTCVALGTC…PMFVREACPH (72 aa)) enclose the UPAR/Ly6 domain. A lipid anchor (GPI-anchor amidated asparagine) is attached at N222. Positions 223–249 (GATCLPIPVWGLQLLLPLLLPSFIHFS) are cleaved as a propeptide — removed in mature form.

In terms of assembly, interacts with VAMP3. Interacts with LY6K. Interacts with DPEP3; co-localized on the cell surface of spermatocytes, spermatids, and testicular spermatozoa, co-localized only in cytoplasmic droplets of caput and corpus epididymal sperm. Interacts with ADAM5. In terms of processing, N-glycosylated; by high mannose and/or biantennary complex and/or certain types of hybrid oligosaccharides; possesses different oligosaccharides chains according to its subcellular localization in the testis. Sheds from membrane raft by ACE and released from the cell surface of epididymal sperm while it passes through the caput epididymis leading to disappearance of TEX101 on spermatozoa; is essential to produce fertile spermatozoa. As to expression, detected in testis and spermatogonia. Not detected in spermatocytes. Detected in blood leukocytes.

The protein resides in the cell membrane. It localises to the membrane raft. It is found in the cytoplasmic vesicle. The protein localises to the secretory vesicle. Its subcellular location is the acrosome. The protein resides in the secreted. Its function is as follows. Plays a role in fertilization by controlling binding of sperm to zona pellucida and migration of spermatozoa into the oviduct. May play a role in signal transduction and promote protein tyrosine phosphorylation. In Homo sapiens (Human), this protein is Testis-expressed protein 101.